A 524-amino-acid polypeptide reads, in one-letter code: FAD-dependent monooxygenase opdD (524 aa).

FAD-binding residues include Glu48 and Arg145.

This sequence belongs to the paxM FAD-dependent monooxygenase family.

It functions in the pathway secondary metabolite biosynthesis. FAD-dependent monooxygenase; part of the gene cluster that mediates the biosynthesis of oxopyrrolidines, polyketide-amino acid hybrid compounds with feature structures of tetramic acid. Does not seem to play a role in oxopyrrolidines A and B biosynthesis. May be involved in further modifications of these oxopyrrolidines. This is FAD-dependent monooxygenase opdD from Penicillium oxalicum (strain 114-2 / CGMCC 5302) (Penicillium decumbens).